The chain runs to 396 residues: Phosphoglycerate kinase (396 aa).

Residues 21–23, Arg-36, 59–62, Arg-119, and Arg-156 each bind substrate; these read DFN and HLGK. Residues Lys-206, Glu-325, and 352–355 each bind ATP; that span reads GGDS.

Belongs to the phosphoglycerate kinase family. As to quaternary structure, monomer.

It localises to the cytoplasm. The catalysed reaction is (2R)-3-phosphoglycerate + ATP = (2R)-3-phospho-glyceroyl phosphate + ADP. Its pathway is carbohydrate degradation; glycolysis; pyruvate from D-glyceraldehyde 3-phosphate: step 2/5. The chain is Phosphoglycerate kinase from Staphylococcus saprophyticus subsp. saprophyticus (strain ATCC 15305 / DSM 20229 / NCIMB 8711 / NCTC 7292 / S-41).